Consider the following 297-residue polypeptide: NADPH-dependent 1-acyldihydroxyacetone phosphate reductase (297 aa).

The GXSXG motif lies at 16 to 20; the sequence is GASGG. The Nucleophile; for lipase activity role is filled by Ser18. NADP(+)-binding residues include Ile21, Asp64, Asn93, Arg126, Tyr157, Lys161, Val190, and Thr192. Tyr157 functions as the Proton acceptor in the catalytic mechanism. Lys161 acts as the Lowers pKa of active site Tyr in catalysis.

Belongs to the short-chain dehydrogenases/reductases (SDR) family.

The protein localises to the lipid droplet. The protein resides in the mitochondrion outer membrane. It is found in the endoplasmic reticulum. It carries out the reaction a 1-acylglycerone 3-phosphate + NADPH + H(+) = a 1-acyl-sn-glycero-3-phosphate + NADP(+). The enzyme catalyses 1-hexadecanoyl-sn-glycero-3-phosphate + NADP(+) = 1-hexadecanoylglycerone 3-phosphate + NADPH + H(+). The catalysed reaction is a triacylglycerol + H2O = a diacylglycerol + a fatty acid + H(+). It catalyses the reaction 1,2,3-tri-(9Z-octadecenoyl)-glycerol + H2O = di-(9Z)-octadecenoylglycerol + (9Z)-octadecenoate + H(+). Inhibited by divalent cations and N-ethylmaleimide. Activity is reduced under anaerobic growth conditions. Can convert acyl and alkyl dihydroxyacetone-phosphate (DHAP) into glycerolipids and ether lipids, respectively. Required for the biosynthesis of phosphatidic acid via the DHAP pathway, where it reduces 1-acyl DHAP to lysophosphatidic acid (LPA). Also has triacylglycerol (TAG) lipase activity. Involved in the mobilization of the non-polar storage lipids triacylglycerols (TAGs) from lipid particles by hydrolysis of TAGs. Required for spore germination. Plays a role in cell wall biogenesis, but this effect may be indirect by affecting the activities of cell wall synthesis enzymes. Lipolysis of TAG by AYR1 is essential for starvation-induced autophagy. Forms an NADPH-regulated cation-selective channel in the mitochondrial outer membrane. The protein is NADPH-dependent 1-acyldihydroxyacetone phosphate reductase of Saccharomyces cerevisiae (strain ATCC 204508 / S288c) (Baker's yeast).